The following is a 290-amino-acid chain: Fat storage-inducing transmembrane protein 1 (290 aa).

At 1 to 18 the chain is on the lumenal side; the sequence is MERGPVVGAGLGARARIR. The helical transmembrane segment at 19–39 threads the bilayer; that stretch reads TLLGCLVKVLLWVASALLYFG. Residues 40–54 lie on the Cytoplasmic side of the membrane; it reads SEQAARLLGSPCLRR. A helical transmembrane segment spans residues 55–75; sequence LYHAWLAAVVIFGPLLQFHVN. Residues 76–94 are Lumenal-facing; that stretch reads PRTIFASHGNFFNIKFVNS. Residues 95-115 form a helical membrane-spanning segment; sequence AWGWTCTFLGGFVLLVVFLAT. Topologically, residues 116 to 141 are cytoplasmic; it reads RRVAVTARHLSRLVVGAAVWRGAGRA. The chain crosses the membrane as a helical span at residues 142 to 162; the sequence is FLLIEDLTGSCFEPLPQGLLL. Residues 163–187 lie on the Lumenal side of the membrane; sequence HELPDRRSRLAAGHQWRGYTVSSHT. The active site involves histidine 186. Residues 188-208 form a helical membrane-spanning segment; that stretch reads FLLTFCCLLMAEEAAVFAKYL. At 209 to 220 the chain is on the cytoplasmic side; sequence AHGLPAGAPLRL. A helical transmembrane segment spans residues 221 to 241; that stretch reads VFLLNVLLLGLWNFLLLCTVI. Over 242-249 the chain is Lumenal; it reads YFHQYTHK. Histidine 244 is an active-site residue. The helical transmembrane segment at 250-270 threads the bilayer; sequence VVGAAVGTFAWYLTYGSWYHQ. Residues 271 to 290 are Cytoplasmic-facing; that stretch reads PWSPGSPGHGLFTHPSRKHN.

It belongs to the FIT family. FIT1 subfamily.

It is found in the endoplasmic reticulum membrane. In terms of biological role, plays an important role in the formation of lipid droplets (LDs) which are storage organelles at the center of lipid and energy homeostasis. Directly binds to diacylglycerol (DAGs) and triacylglycerol. The chain is Fat storage-inducing transmembrane protein 1 from Sus scrofa (Pig).